Here is a 312-residue protein sequence, read N- to C-terminus: Fibrinogen-like protein 1 (312 aa).

Residues M1–A22 form the signal peptide. Residues L23 to Q61 are a coiled coil. Residues L74–D306 enclose the Fibrinogen C-terminal domain. 2 cysteine pairs are disulfide-bonded: C83/C112 and C248/C261.

In terms of assembly, homodimer. Interacts (via the Fibrinogen C-terminal domain) with LAG3 (via Ig-like domains 1 and 2). Under normal conditions, liver-specific.

The protein localises to the secreted. Its function is as follows. Immune suppressive molecule that inhibits antigen-specific T-cell activation by acting as a major ligand of LAG3. Responsible for LAG3 T-cell inhibitory function. Binds LAG3 independently from MHC class II (MHC-II). Secreted by, and promotes growth of, hepatocytes. The polypeptide is Fibrinogen-like protein 1 (Homo sapiens (Human)).